The sequence spans 1149 residues: DNA polymerase (1149 aa).

Positions 1 to 28 (MSLVQSHGTSGLFTEPPNSINQQESSGP) are enriched in polar residues. Residues 1–49 (MSLVQSHGTSGLFTEPPNSINQQESSGPSLPAQDATQASASSARAGATP) are disordered. Residues 31–49 (PAQDATQASASSARAGATP) are compositionally biased toward low complexity.

This sequence belongs to the DNA polymerase type-B family. Heterodimer with the terminal protein; this heterodimer binds to bp 9 to 18 of the genome. Forms a complex with viral pTP, DBP and hosts NFIA and POU2F1/OCT1 for initiation of replication.

It is found in the host nucleus. The catalysed reaction is DNA(n) + a 2'-deoxyribonucleoside 5'-triphosphate = DNA(n+1) + diphosphate. In terms of biological role, eukaryotic-type DNA polymerase involved in viral genomic replication. DNA synthesis is protein primed, and acts in a strand displacement replication. Assembles in complex with viral pTP, DBP, host NFIA and host POU2F1/OCT1 on viral origin of replication. The polymerase covalently transfers dCMP onto pTP, thereby initiating complementary strand synthesis. This Canine adenovirus serotype 1 (strain CLL) (CAdV-1) protein is DNA polymerase.